The sequence spans 179 residues: DELTA-actitoxin-Afr1c (179 aa).

The N-terminal alpha-helix that contributes to the pore stretch occupies residues 1 to 29 (SAEVAGAIIDGASLTFDVLQTVLKALGDV). The interval 11–30 (GASLTFDVLQTVLKALGDVS) is N-terminal region. Arg-31 is an an N-(acyl)-sphingosylphosphocholine binding site. N-acetyl-D-glucosamine 6-sulfate is bound by residues Tyr-51 and Arg-53. Positions 53, 54, 79, 85, 113, 114, 116, 133, 137, 138, 144, and 168 each coordinate an N-(acyl)-sphingosylphosphocholine. The interval 105-120 (SIPFDYNLYSNWWNVK) is trp-rich region, which is important for the binding to lipid membrane. Residue Tyr-138 participates in N-acetyl-D-glucosamine 6-sulfate binding. Positions 144–146 (RGD) match the Cell attachment site, crucial for protein stability motif.

It belongs to the actinoporin family. Sea anemone subfamily. In terms of assembly, octamer or nonamer in membranes. Monomer in the soluble state.

The protein localises to the secreted. It is found in the nematocyst. It localises to the target cell membrane. Functionally, pore-forming toxin (PFT) that consists of a crown-shaped octamer or nonamer that forms cation-selective hydrophilic pores of about 1.5 nm (inside) and 13 nm (outside) and causes cytolysis. It causes cardiac stimulation. Also causes hemolysis (HC(50)=0.3 nM). Interestingly, the Phe-16 is crucial for hemolysis. Pore formation is a multi-step process that involves specific recognition of membrane sphingomyelin (but neither cholesterol nor phosphatidylcholine) using aromatic rich region and adjacent phosphocholine (POC) binding site, firm binding to the membrane (mainly driven by hydrophobic interactions) accompanied by the transfer of the N-terminal region to the lipid-water interface and finally pore formation after oligomerization of monomers. It is probable that a dimeric form is an assembly intermediate before the complete oligomerization. The formation of stable pores occurs only in vesicles composed of DOPC/SM (there is no oligomerization when the PFT is treated with vesicles of DOPC or SM alone). The transmembrane pore displays 8 lateral perforations, one at each subunit-subunit interface, partially occupied by the acyl-chain region of a bridging lipid. Each pore contains 24 lipid molecules, firmly bound to each subunit, that is, 3 lipids (L1, L2, L3, L4 and/or L5) are associated to each subunit. Lipid L1 bridges 2 subunits, whereas lipids L2 and L3 bind to sites at single subunit. The polypeptide is DELTA-actitoxin-Afr1c (Actinia fragacea (Strawberry anemone)).